A 270-amino-acid chain; its full sequence is Putative pyruvate, phosphate dikinase regulatory protein (270 aa).

151–158 (GVSRTSKT) contacts ADP.

Belongs to the pyruvate, phosphate/water dikinase regulatory protein family. PDRP subfamily.

It catalyses the reaction N(tele)-phospho-L-histidyl/L-threonyl-[pyruvate, phosphate dikinase] + ADP = N(tele)-phospho-L-histidyl/O-phospho-L-threonyl-[pyruvate, phosphate dikinase] + AMP + H(+). The catalysed reaction is N(tele)-phospho-L-histidyl/O-phospho-L-threonyl-[pyruvate, phosphate dikinase] + phosphate + H(+) = N(tele)-phospho-L-histidyl/L-threonyl-[pyruvate, phosphate dikinase] + diphosphate. Its function is as follows. Bifunctional serine/threonine kinase and phosphorylase involved in the regulation of the pyruvate, phosphate dikinase (PPDK) by catalyzing its phosphorylation/dephosphorylation. This Lysinibacillus sphaericus (strain C3-41) protein is Putative pyruvate, phosphate dikinase regulatory protein.